Reading from the N-terminus, the 84-residue chain is MNLFDFFRGRQKQTSASVAKERLQIIVAHERGQRSEPDYLPALQKELLEVIRKYVNIGNDDVHIELENQGSCSILELNITLPDR.

Belongs to the MinE family.

Prevents the cell division inhibition by proteins MinC and MinD at internal division sites while permitting inhibition at polar sites. This ensures cell division at the proper site by restricting the formation of a division septum at the midpoint of the long axis of the cell. The sequence is that of Cell division topological specificity factor from Pseudomonas putida (strain ATCC 700007 / DSM 6899 / JCM 31910 / BCRC 17059 / LMG 24140 / F1).